The following is a 267-amino-acid chain: Diphthine synthase (267 aa).

Residues Leu9, Asp85, Val88, Ser113–Ile114, Leu170, Ala211, and His236 each bind S-adenosyl-L-methionine.

The protein belongs to the diphthine synthase family. As to quaternary structure, homodimer.

The enzyme catalyses 2-[(3S)-amino-3-carboxypropyl]-L-histidyl-[translation elongation factor 2] + 3 S-adenosyl-L-methionine = diphthine-[translation elongation factor 2] + 3 S-adenosyl-L-homocysteine + 3 H(+). It functions in the pathway protein modification; peptidyl-diphthamide biosynthesis. S-adenosyl-L-methionine-dependent methyltransferase that catalyzes the trimethylation of the amino group of the modified target histidine residue in translation elongation factor 2 (EF-2), to form an intermediate called diphthine. The three successive methylation reactions represent the second step of diphthamide biosynthesis. The sequence is that of Diphthine synthase from Methanococcoides burtonii (strain DSM 6242 / NBRC 107633 / OCM 468 / ACE-M).